The primary structure comprises 357 residues: UDP-N-acetylglucosamine--N-acetylmuramyl-(pentapeptide) pyrophosphoryl-undecaprenol N-acetylglucosamine transferase (357 aa).

UDP-N-acetyl-alpha-D-glucosamine-binding positions include 14–16 (TGG), N126, R162, S190, I246, 265–270 (ALTVCE), and Q290.

This sequence belongs to the glycosyltransferase 28 family. MurG subfamily.

Its subcellular location is the cell inner membrane. It carries out the reaction di-trans,octa-cis-undecaprenyl diphospho-N-acetyl-alpha-D-muramoyl-L-alanyl-D-glutamyl-meso-2,6-diaminopimeloyl-D-alanyl-D-alanine + UDP-N-acetyl-alpha-D-glucosamine = di-trans,octa-cis-undecaprenyl diphospho-[N-acetyl-alpha-D-glucosaminyl-(1-&gt;4)]-N-acetyl-alpha-D-muramoyl-L-alanyl-D-glutamyl-meso-2,6-diaminopimeloyl-D-alanyl-D-alanine + UDP + H(+). Its pathway is cell wall biogenesis; peptidoglycan biosynthesis. Cell wall formation. Catalyzes the transfer of a GlcNAc subunit on undecaprenyl-pyrophosphoryl-MurNAc-pentapeptide (lipid intermediate I) to form undecaprenyl-pyrophosphoryl-MurNAc-(pentapeptide)GlcNAc (lipid intermediate II). The polypeptide is UDP-N-acetylglucosamine--N-acetylmuramyl-(pentapeptide) pyrophosphoryl-undecaprenol N-acetylglucosamine transferase (Histophilus somni (strain 129Pt) (Haemophilus somnus)).